Reading from the N-terminus, the 451-residue chain is Glutamyl-tRNA reductase (451 aa).

Residues 47-50 (TCNR), serine 132, 137-139 (EPQ), and glutamine 143 contribute to the substrate site. The Nucleophile role is filled by cysteine 48. 212–217 (AAGEMN) contacts NADP(+).

Belongs to the glutamyl-tRNA reductase family. Homodimer.

It catalyses the reaction (S)-4-amino-5-oxopentanoate + tRNA(Glu) + NADP(+) = L-glutamyl-tRNA(Glu) + NADPH + H(+). Its pathway is porphyrin-containing compound metabolism; protoporphyrin-IX biosynthesis; 5-aminolevulinate from L-glutamyl-tRNA(Glu): step 1/2. Catalyzes the NADPH-dependent reduction of glutamyl-tRNA(Glu) to glutamate 1-semialdehyde (GSA). The sequence is that of Glutamyl-tRNA reductase from Psychrobacter sp. (strain PRwf-1).